We begin with the raw amino-acid sequence, 475 residues long: Aspartyl/glutamyl-tRNA(Asn/Gln) amidotransferase subunit B (475 aa).

The protein belongs to the GatB/GatE family. GatB subfamily. In terms of assembly, heterotrimer of A, B and C subunits.

The catalysed reaction is L-glutamyl-tRNA(Gln) + L-glutamine + ATP + H2O = L-glutaminyl-tRNA(Gln) + L-glutamate + ADP + phosphate + H(+). It carries out the reaction L-aspartyl-tRNA(Asn) + L-glutamine + ATP + H2O = L-asparaginyl-tRNA(Asn) + L-glutamate + ADP + phosphate + 2 H(+). Its function is as follows. Allows the formation of correctly charged Asn-tRNA(Asn) or Gln-tRNA(Gln) through the transamidation of misacylated Asp-tRNA(Asn) or Glu-tRNA(Gln) in organisms which lack either or both of asparaginyl-tRNA or glutaminyl-tRNA synthetases. The reaction takes place in the presence of glutamine and ATP through an activated phospho-Asp-tRNA(Asn) or phospho-Glu-tRNA(Gln). The protein is Aspartyl/glutamyl-tRNA(Asn/Gln) amidotransferase subunit B of Clostridium novyi (strain NT).